The sequence spans 676 residues: DNA ligase (676 aa).

Residues 42-46 (DDVYD), 91-92 (SL), and E121 each bind NAD(+). The active-site N6-AMP-lysine intermediate is the K123. Positions 144, 178, 294, and 318 each coordinate NAD(+). Residues C412, C415, C430, and C435 each contribute to the Zn(2+) site. A BRCT domain is found at 596-676 (NSTSEFTGKR…QLQAAMDETK (81 aa)).

Belongs to the NAD-dependent DNA ligase family. LigA subfamily. Requires Mg(2+) as cofactor. The cofactor is Mn(2+).

The enzyme catalyses NAD(+) + (deoxyribonucleotide)n-3'-hydroxyl + 5'-phospho-(deoxyribonucleotide)m = (deoxyribonucleotide)n+m + AMP + beta-nicotinamide D-nucleotide.. Functionally, DNA ligase that catalyzes the formation of phosphodiester linkages between 5'-phosphoryl and 3'-hydroxyl groups in double-stranded DNA using NAD as a coenzyme and as the energy source for the reaction. It is essential for DNA replication and repair of damaged DNA. This Levilactobacillus brevis (strain ATCC 367 / BCRC 12310 / CIP 105137 / JCM 1170 / LMG 11437 / NCIMB 947 / NCTC 947) (Lactobacillus brevis) protein is DNA ligase.